We begin with the raw amino-acid sequence, 1205 residues long: ATP-dependent DNA helicase MER3 homolog (1205 aa).

A Helicase ATP-binding domain is found at 41–236 (PACFLSDVNM…WLAVPSEGIK (196 aa)). 54–61 (APTGSGKT) contacts ATP. A DEAH box motif is present at residues 172-175 (DEVH). The Helicase C-terminal domain maps to 266-467 (RLQSFIFDIL…CAVEHLNAEI (202 aa)). The 312-residue stretch at 541–852 (PLEPGRLMTK…FEEYVGLDIH (312 aa)) folds into the SEC63 domain. The segment covering 1075-1091 (QKSEILNRTQGKNSTQL) has biased composition (polar residues). The segment at 1075–1131 (QKSEILNRTQGKNSTQLAGKKAFEKSKTPDENSLHFVGKRDSSSEKSKALSKTPDEN) is disordered. Residues 1095-1122 (KAFEKSKTPDENSLHFVGKRDSSSEKSK) show a composition bias toward basic and acidic residues.

It belongs to the helicase family. SKI2 subfamily. As to expression, transcribed preferentially in early stages of meiocyte development and during meiosis in young flowers.

It is found in the nucleus. The protein localises to the chromosome. It catalyses the reaction Couples ATP hydrolysis with the unwinding of duplex DNA by translocating in the 3'-5' direction.. It carries out the reaction ATP + H2O = ADP + phosphate + H(+). Functionally, DNA helicase required for crossover formation, complete synapsis of homologous chromosomes and bivalent formation during meiosis. Is specific to recombination events resulting in interference-sensitive crossovers (class I meiotic crossover). Works cooperatively with ZIP4 to promote crossovers. The chain is ATP-dependent DNA helicase MER3 homolog from Oryza sativa subsp. japonica (Rice).